The primary structure comprises 221 residues: UPF0502 protein PSPA7_1674 (221 aa).

This sequence belongs to the UPF0502 family.

The chain is UPF0502 protein PSPA7_1674 from Pseudomonas paraeruginosa (strain DSM 24068 / PA7) (Pseudomonas aeruginosa (strain PA7)).